A 307-amino-acid polypeptide reads, in one-letter code: UDP-N-acetylenolpyruvoylglucosamine reductase (307 aa).

Positions 34–199 constitute an FAD-binding PCMH-type domain; the sequence is RVGGPAQVLF…TAVRFRGTPS (166 aa). The active site involves Arg-179. Catalysis depends on Ser-228, which acts as the Proton donor. Residue Glu-298 is part of the active site.

This sequence belongs to the MurB family. FAD serves as cofactor.

It localises to the cytoplasm. The enzyme catalyses UDP-N-acetyl-alpha-D-muramate + NADP(+) = UDP-N-acetyl-3-O-(1-carboxyvinyl)-alpha-D-glucosamine + NADPH + H(+). The protein operates within cell wall biogenesis; peptidoglycan biosynthesis. In terms of biological role, cell wall formation. This is UDP-N-acetylenolpyruvoylglucosamine reductase from Bradyrhizobium sp. (strain ORS 278).